The following is a 179-amino-acid chain: Large ribosomal subunit protein uL5 (179 aa).

The protein belongs to the universal ribosomal protein uL5 family. As to quaternary structure, part of the 50S ribosomal subunit; part of the 5S rRNA/L5/L18/L25 subcomplex. Contacts the 5S rRNA and the P site tRNA. Forms a bridge to the 30S subunit in the 70S ribosome.

This is one of the proteins that bind and probably mediate the attachment of the 5S RNA into the large ribosomal subunit, where it forms part of the central protuberance. In the 70S ribosome it contacts protein S13 of the 30S subunit (bridge B1b), connecting the 2 subunits; this bridge is implicated in subunit movement. Contacts the P site tRNA; the 5S rRNA and some of its associated proteins might help stabilize positioning of ribosome-bound tRNAs. This chain is Large ribosomal subunit protein uL5, found in Rickettsia akari (strain Hartford).